The primary structure comprises 430 residues: Asparagine--tRNA ligase (430 aa).

This sequence belongs to the class-II aminoacyl-tRNA synthetase family. As to quaternary structure, homodimer.

It localises to the cytoplasm. The catalysed reaction is tRNA(Asn) + L-asparagine + ATP = L-asparaginyl-tRNA(Asn) + AMP + diphosphate + H(+). In Staphylococcus aureus (strain USA300), this protein is Asparagine--tRNA ligase.